Reading from the N-terminus, the 37-residue chain is Large ribosomal subunit protein bL36c (37 aa).

It belongs to the bacterial ribosomal protein bL36 family.

The protein resides in the plastid. The protein localises to the chloroplast. This chain is Large ribosomal subunit protein bL36c (rpl36), found in Euglena gracilis.